Consider the following 450-residue polypeptide: 23S rRNA (uracil(1939)-C(5))-methyltransferase RlmD (450 aa).

The TRAM domain maps to 12–70 (SKQLSAKLSLSVNQLDHLGAGIAQHQGKVVFIPGALPDETVTVQLTEQKKNYARAKLIK). 4 residues coordinate [4Fe-4S] cluster: cysteine 83, cysteine 89, cysteine 92, and cysteine 171. Residues glutamine 283, phenylalanine 312, asparagine 317, glutamate 333, aspartate 360, and aspartate 380 each contribute to the S-adenosyl-L-methionine site. Residue cysteine 406 is the Nucleophile of the active site.

It belongs to the class I-like SAM-binding methyltransferase superfamily. RNA M5U methyltransferase family. RlmD subfamily.

The catalysed reaction is uridine(1939) in 23S rRNA + S-adenosyl-L-methionine = 5-methyluridine(1939) in 23S rRNA + S-adenosyl-L-homocysteine + H(+). Its function is as follows. Catalyzes the formation of 5-methyl-uridine at position 1939 (m5U1939) in 23S rRNA. This Shewanella baltica (strain OS223) protein is 23S rRNA (uracil(1939)-C(5))-methyltransferase RlmD.